The chain runs to 365 residues: Chorismate synthase (365 aa).

Arg-48 and Arg-54 together coordinate NADP(+). Residues 125–127 (RSS), 237–238 (NA), Gly-277, 292–296 (KPTSS), and Arg-318 each bind FMN.

The protein belongs to the chorismate synthase family. In terms of assembly, homotetramer. The cofactor is FMNH2.

It catalyses the reaction 5-O-(1-carboxyvinyl)-3-phosphoshikimate = chorismate + phosphate. The protein operates within metabolic intermediate biosynthesis; chorismate biosynthesis; chorismate from D-erythrose 4-phosphate and phosphoenolpyruvate: step 7/7. Functionally, catalyzes the anti-1,4-elimination of the C-3 phosphate and the C-6 proR hydrogen from 5-enolpyruvylshikimate-3-phosphate (EPSP) to yield chorismate, which is the branch point compound that serves as the starting substrate for the three terminal pathways of aromatic amino acid biosynthesis. This reaction introduces a second double bond into the aromatic ring system. The protein is Chorismate synthase of Polaromonas naphthalenivorans (strain CJ2).